A 293-amino-acid polypeptide reads, in one-letter code: Elongation factor Ts (293 aa).

Residues threonine 81–valine 84 are involved in Mg(2+) ion dislocation from EF-Tu.

It belongs to the EF-Ts family.

It is found in the cytoplasm. Its function is as follows. Associates with the EF-Tu.GDP complex and induces the exchange of GDP to GTP. It remains bound to the aminoacyl-tRNA.EF-Tu.GTP complex up to the GTP hydrolysis stage on the ribosome. The sequence is that of Elongation factor Ts from Thioalkalivibrio sulfidiphilus (strain HL-EbGR7).